A 245-amino-acid polypeptide reads, in one-letter code: Ribosomal RNA large subunit methyltransferase E (245 aa).

A disordered region spans residues M1–K25. A compositionally biased stretch (basic residues) spans S11–K25. The S-adenosyl-L-methionine site is built by G81, W83, D104, D120, and D144. Catalysis depends on K184, which acts as the Proton acceptor.

This sequence belongs to the class I-like SAM-binding methyltransferase superfamily. RNA methyltransferase RlmE family.

The protein localises to the cytoplasm. The catalysed reaction is uridine(2552) in 23S rRNA + S-adenosyl-L-methionine = 2'-O-methyluridine(2552) in 23S rRNA + S-adenosyl-L-homocysteine + H(+). Specifically methylates the uridine in position 2552 of 23S rRNA at the 2'-O position of the ribose in the fully assembled 50S ribosomal subunit. In Sinorhizobium fredii (strain NBRC 101917 / NGR234), this protein is Ribosomal RNA large subunit methyltransferase E.